Here is an 893-residue protein sequence, read N- to C-terminus: Protein translocase subunit SecA (893 aa).

ATP-binding positions include Gln-87, 105–109 (GEGKT), and Asp-512. Residues 840–849 (VEEQHRKSEE) are compositionally biased toward basic and acidic residues. The segment at 840 to 893 (VEEQHRKSEEVPMDFQHQSASSPSEQAQTPRVGRNEPCPCGSGKKYKQCHGKLA) is disordered. The segment covering 855–868 (QHQSASSPSEQAQT) has biased composition (polar residues). 4 residues coordinate Zn(2+): Cys-877, Cys-879, Cys-888, and His-889. Positions 883 to 893 (KKYKQCHGKLA) are enriched in basic residues.

It belongs to the SecA family. Monomer and homodimer. Part of the essential Sec protein translocation apparatus which comprises SecA, SecYEG and auxiliary proteins SecDF-YajC and YidC. Zn(2+) serves as cofactor.

It is found in the cell inner membrane. Its subcellular location is the cytoplasm. The enzyme catalyses ATP + H2O + cellular proteinSide 1 = ADP + phosphate + cellular proteinSide 2.. In terms of biological role, part of the Sec protein translocase complex. Interacts with the SecYEG preprotein conducting channel. Has a central role in coupling the hydrolysis of ATP to the transfer of proteins into and across the cell membrane, serving both as a receptor for the preprotein-SecB complex and as an ATP-driven molecular motor driving the stepwise translocation of polypeptide chains across the membrane. In Colwellia psychrerythraea (strain 34H / ATCC BAA-681) (Vibrio psychroerythus), this protein is Protein translocase subunit SecA.